A 144-amino-acid chain; its full sequence is Large ribosomal subunit protein uL13 (144 aa).

The protein belongs to the universal ribosomal protein uL13 family. Part of the 50S ribosomal subunit.

Its function is as follows. This protein is one of the early assembly proteins of the 50S ribosomal subunit, although it is not seen to bind rRNA by itself. It is important during the early stages of 50S assembly. The chain is Large ribosomal subunit protein uL13 from Mesomycoplasma hyopneumoniae (strain 7448) (Mycoplasma hyopneumoniae).